A 230-amino-acid chain; its full sequence is Cytochrome c oxidase subunit 2 (230 aa).

The Mitochondrial intermembrane portion of the chain corresponds to 1–14; that stretch reads MAHPSQLGFQDAAS. A helical membrane pass occupies residues 15 to 45; sequence PVMEELLHFHDHTLMIVFLISTLVLYIIMAM. The Mitochondrial matrix portion of the chain corresponds to 46-59; sequence VSTKLTNKYILDSQ. The chain crosses the membrane as a helical span at residues 60–87; it reads EIEIVWTILPAVILIMIALPSLRILYLM. At 88–230 the chain is on the mitochondrial intermembrane side; it reads DEINDPHLTI…SWSSLMLEEA (143 aa). Cu cation is bound by residues His161, Cys196, Glu198, Cys200, His204, and Met207. Mg(2+) is bound at residue Glu198.

It belongs to the cytochrome c oxidase subunit 2 family. As to quaternary structure, component of the cytochrome c oxidase (complex IV, CIV), a multisubunit enzyme composed of 14 subunits. The complex is composed of a catalytic core of 3 subunits MT-CO1, MT-CO2 and MT-CO3, encoded in the mitochondrial DNA, and 11 supernumerary subunits COX4I, COX5A, COX5B, COX6A, COX6B, COX6C, COX7A, COX7B, COX7C, COX8 and NDUFA4, which are encoded in the nuclear genome. The complex exists as a monomer or a dimer and forms supercomplexes (SCs) in the inner mitochondrial membrane with NADH-ubiquinone oxidoreductase (complex I, CI) and ubiquinol-cytochrome c oxidoreductase (cytochrome b-c1 complex, complex III, CIII), resulting in different assemblies (supercomplex SCI(1)III(2)IV(1) and megacomplex MCI(2)III(2)IV(2)). Found in a complex with TMEM177, COA6, COX18, COX20, SCO1 and SCO2. Interacts with TMEM177 in a COX20-dependent manner. Interacts with COX20. Interacts with COX16. Cu cation serves as cofactor.

Its subcellular location is the mitochondrion inner membrane. It carries out the reaction 4 Fe(II)-[cytochrome c] + O2 + 8 H(+)(in) = 4 Fe(III)-[cytochrome c] + 2 H2O + 4 H(+)(out). In terms of biological role, component of the cytochrome c oxidase, the last enzyme in the mitochondrial electron transport chain which drives oxidative phosphorylation. The respiratory chain contains 3 multisubunit complexes succinate dehydrogenase (complex II, CII), ubiquinol-cytochrome c oxidoreductase (cytochrome b-c1 complex, complex III, CIII) and cytochrome c oxidase (complex IV, CIV), that cooperate to transfer electrons derived from NADH and succinate to molecular oxygen, creating an electrochemical gradient over the inner membrane that drives transmembrane transport and the ATP synthase. Cytochrome c oxidase is the component of the respiratory chain that catalyzes the reduction of oxygen to water. Electrons originating from reduced cytochrome c in the intermembrane space (IMS) are transferred via the dinuclear copper A center (CU(A)) of subunit 2 and heme A of subunit 1 to the active site in subunit 1, a binuclear center (BNC) formed by heme A3 and copper B (CU(B)). The BNC reduces molecular oxygen to 2 water molecules using 4 electrons from cytochrome c in the IMS and 4 protons from the mitochondrial matrix. The sequence is that of Cytochrome c oxidase subunit 2 (MT-CO2) from Squalus acanthias (Spiny dogfish).